Reading from the N-terminus, the 582-residue chain is Regulatory solute carrier protein family 1 member 1 (582 aa).

Disordered stretches follow at residues 1–32 (MSSL…ARSV), 56–76 (KASA…LQVL), 143–180 (EKSW…VPQD), 303–325 (VDMS…HGQP), 363–384 (VTCQ…SGRR), 390–409 (LTPS…SESG), 426–452 (ASTS…ESAR), and 483–529 (SEGA…LSTP). Positions 16–32 (SGQSPEVGSPTSLARSV) are enriched in polar residues. Polar residues predominate over residues 148-179 (PENQTPSPVNGLQQHRETGSVQREAGQQSVPQ). Residues 390-408 (LTPSDQYSQGSCHQATSES) show a composition bias toward polar residues. Basic and acidic residues-rich tracts occupy residues 438–452 (SPDR…ESAR) and 490–503 (PSEH…DRPE). A UBA domain is found at 536–576 (IFPAADVDRILGAGFTLQEALGALHRVGGNADLALLVLLAK).

As to quaternary structure, interacts with YRDC. Expressed in epithelial and subepithelial cells of small intestine.

It localises to the cell membrane. The protein resides in the nucleus. Its subcellular location is the golgi apparatus. The protein localises to the trans-Golgi network. Its function is as follows. Mediates transcriptional and post-transcriptional regulation of SLC5A1. Inhibits a dynamin and PKC-dependent exocytotic pathway of SLC5A1. Also involved in transcriptional regulation of SLC22A2. Exhibits glucose-dependent, short-term inhibition of SLC5A1 and SLC22A2 by inhibiting the release of vesicles from the trans-Golgi network. Regulates the expression of SLC5A1 in a tissue-specific manner and is specifically involved in its regulation in the small intestine. The chain is Regulatory solute carrier protein family 1 member 1 (Rsc1a1) from Mus musculus (Mouse).